The chain runs to 85 residues: Small ribosomal subunit protein uS17 (85 aa).

This sequence belongs to the universal ribosomal protein uS17 family. Part of the 30S ribosomal subunit.

Its function is as follows. One of the primary rRNA binding proteins, it binds specifically to the 5'-end of 16S ribosomal RNA. In Geobacter metallireducens (strain ATCC 53774 / DSM 7210 / GS-15), this protein is Small ribosomal subunit protein uS17.